A 203-amino-acid polypeptide reads, in one-letter code: Guanylate kinase (203 aa).

In terms of domain architecture, Guanylate kinase-like spans 3–181 (GTLYIVAAPS…AVSEMCAIFT (179 aa)). 10-17 (APSGAGKS) lines the ATP pocket.

The protein belongs to the guanylate kinase family.

Its subcellular location is the cytoplasm. The enzyme catalyses GMP + ATP = GDP + ADP. Its function is as follows. Essential for recycling GMP and indirectly, cGMP. The polypeptide is Guanylate kinase (Xanthomonas axonopodis pv. citri (strain 306)).